Consider the following 299-residue polypeptide: Transcription elongation factor A protein 2 (299 aa).

A TFIIS N-terminal domain is found at 5 to 82 (EEIARIARRL…KSWKKLLDVS (78 aa)). Residue Lys-57 forms a Glycyl lysine isopeptide (Lys-Gly) (interchain with G-Cter in ubiquitin) linkage. Phosphoserine is present on residues Ser-59 and Ser-100. Residues 83–126 (DGKSRDQGRGTPLPTSSSKDASGTTDLSCKKPDPPRTSSTPRIT) form a disordered region. The span at 95–109 (LPTSSSKDASGTTDL) shows a compositional bias: polar residues. The 117-residue stretch at 138 to 254 (VRNKCREMLT…EHQMARTGGT (117 aa)) folds into the TFIIS central domain. A TFIIS-type zinc finger spans residues 257–297 (DLFTCNKCRKKNCTYTQVQTRSSDEPMTTYVVCNECGNRWK). 4 residues coordinate Zn(2+): Cys-261, Cys-264, Cys-289, and Cys-292.

The protein belongs to the TFS-II family. In terms of assembly, interacts with the basal transcription factor GTF2B. Interacts with REXO1. As to expression, testis specific.

It localises to the nucleus. Its function is as follows. Necessary for efficient RNA polymerase II transcription elongation past template-encoded arresting sites. The arresting sites in DNA have the property of trapping a certain fraction of elongating RNA polymerases that pass through, resulting in locked ternary complexes. Cleavage of the nascent transcript by S-II allows the resumption of elongation from the new 3'-terminus. The chain is Transcription elongation factor A protein 2 (Tcea2) from Rattus norvegicus (Rat).